The sequence spans 143 residues: Submaxillary gland androgen-regulated protein 2, isoform delta (143 aa).

Residues 1–22 (MKPLCLVFGLCVLIGCFLSSEC) form the signal peptide. Disordered stretches follow at residues 28–52 (GQHD…PDPN) and 116–143 (VPRK…TDSF). Composition is skewed to polar residues over residues 36-45 (LSPSNPSSHF) and 122-143 (NATP…TDSF).

Its subcellular location is the secreted. Functionally, may play a role in protection or detoxification. The chain is Submaxillary gland androgen-regulated protein 2, isoform delta (Smr2) from Mus musculus (Mouse).